The chain runs to 225 residues: uncharacterized protein (225 aa).

6 consecutive transmembrane segments (helical) span residues 1-21 (MFIG…AKKV), 31-51 (SPLL…NVPY), 56-76 (LGGG…AIPL), 88-108 (VEII…TALI), 145-165 (VTAV…PMVI), and 205-225 (VSMI…LSFM).

This sequence belongs to the YohK (E.coli)/YwbG (IPA-22R) (B.subtilis) family.

Its subcellular location is the cell membrane. This is an uncharacterized protein from Bacillus subtilis (strain 168).